Reading from the N-terminus, the 316-residue chain is Olfactory receptor 4N4C (316 aa).

Residues methionine 1–leucine 26 lie on the Cytoplasmic side of the membrane. Residues valine 27–phenylalanine 47 form a helical membrane-spanning segment. Residues threonine 48–threonine 56 are Extracellular-facing. Residues alanine 57–valine 77 form a helical membrane-spanning segment. Residues alanine 78–threonine 99 lie on the Cytoplasmic side of the membrane. Cysteine 97 and cysteine 179 are oxidised to a cystine. A helical membrane pass occupies residues glutamine 100–phenylalanine 120. Topologically, residues aspartate 121–alanine 143 are extracellular. Residues methionine 144–leucine 164 form a helical membrane-spanning segment. Topologically, residues arginine 165–glycine 204 are cytoplasmic. The helical transmembrane segment at leucine 205–valine 225 threads the bilayer. Topologically, residues arginine 226–arginine 243 are extracellular. Residues valine 244 to alanine 264 traverse the membrane as a helical segment. Topologically, residues leucine 265 to aspartate 268 are cytoplasmic. Residues lysine 269–leucine 289 traverse the membrane as a helical segment. The Extracellular segment spans residues arginine 290–asparagine 316.

This sequence belongs to the G-protein coupled receptor 1 family.

The protein resides in the membrane. In terms of biological role, odorant receptor. In Homo sapiens (Human), this protein is Olfactory receptor 4N4C.